The sequence spans 63 residues: Conotoxin TxMRCL-D012 (63 aa).

An N-terminal signal peptide occupies residues 1-19; the sequence is MRCLPVFVILLLLIASTPS. Positions 20–47 are excised as a propeptide; the sequence is DTVPLKTKDDMPQASFHGNARRTLQMLS. Gln50 bears the Pyrrolidone carboxylic acid mark.

The protein belongs to the conotoxin T superfamily. Contains 2 disulfide bonds that can be either 'C1-C3, C2-C4' or 'C1-C4, C2-C3', since these disulfide connectivities have been observed for conotoxins with cysteine framework V (for examples, see AC P0DQQ7 and AC P81755). Expressed by the venom duct.

The protein localises to the secreted. The sequence is that of Conotoxin TxMRCL-D012 from Conus textile (Cloth-of-gold cone).